Consider the following 315-residue polypeptide: Aspartate carbamoyltransferase catalytic subunit (315 aa).

Positions 55 and 56 each coordinate carbamoyl phosphate. Residue K83 coordinates L-aspartate. Positions 105, 138, and 141 each coordinate carbamoyl phosphate. R171 and R225 together coordinate L-aspartate. 2 residues coordinate carbamoyl phosphate: G266 and P267.

This sequence belongs to the aspartate/ornithine carbamoyltransferase superfamily. ATCase family. Heterododecamer (2C3:3R2) of six catalytic PyrB chains organized as two trimers (C3), and six regulatory PyrI chains organized as three dimers (R2).

It carries out the reaction carbamoyl phosphate + L-aspartate = N-carbamoyl-L-aspartate + phosphate + H(+). Its pathway is pyrimidine metabolism; UMP biosynthesis via de novo pathway; (S)-dihydroorotate from bicarbonate: step 2/3. Catalyzes the condensation of carbamoyl phosphate and aspartate to form carbamoyl aspartate and inorganic phosphate, the committed step in the de novo pyrimidine nucleotide biosynthesis pathway. In Mycolicibacterium vanbaalenii (strain DSM 7251 / JCM 13017 / BCRC 16820 / KCTC 9966 / NRRL B-24157 / PYR-1) (Mycobacterium vanbaalenii), this protein is Aspartate carbamoyltransferase catalytic subunit.